Consider the following 321-residue polypeptide: Sideroflexin-3 (321 aa).

M1 is modified (N-acetylmethionine). Transmembrane regions (helical) follow at residues 146 to 164 (LGTAYVSATTGAVATALGL), 174 to 194 (LVGRFVPFAAVAAANCINIPL), 225 to 245 (IFQVVVSRIGMAIPAMAIPPV), and 266 to 286 (LQVGLVGFCLVFATPLCCALF).

This sequence belongs to the sideroflexin family.

The protein localises to the mitochondrion membrane. The enzyme catalyses L-serine(in) = L-serine(out). Mitochondrial serine transporter that mediates transport of serine into mitochondria, an important step of the one-carbon metabolism pathway. Mitochondrial serine is converted to glycine and formate, which then exits to the cytosol where it is used to generate the charged folates that serve as one-carbon donors. The polypeptide is Sideroflexin-3 (Sfxn3) (Rattus norvegicus (Rat)).